The chain runs to 605 residues: Poly(3-hydroxyalkanoate) polymerase (605 aa).

Residues 319 to 527 (IETAIDMIGV…VLAGSGHIAG (209 aa)) form the AB hydrolase-1 domain. Cys-341 is a catalytic residue.

It belongs to the PHA/PHB synthase family.

The protein resides in the cytoplasm. The protein is Poly(3-hydroxyalkanoate) polymerase (phaC) of Methylorubrum extorquens (Methylobacterium dichloromethanicum).